The primary structure comprises 37 residues: Tick defensin 2 (37 aa).

Cystine bridges form between C4-C26, C11-C34, and C15-C36.

This sequence belongs to the invertebrate defensin family.

It is found in the secreted. Functionally, antibacterial peptide mostly active against Gram-positive bacteria (MIC=0.24 ug/ml on Bacillus subtilis, and MIC=0.94 ug/ml on Micrococcus luteus, MIC&gt;120 ug/ml on both Escherichia coli and Pseudomonas aeruginosa). This chain is Tick defensin 2, found in Ornithodoros savignyi (African eyed tampan).